The following is a 1242-amino-acid chain: Structural polyprotein (1242 aa).

Positions 1–36 (MFPYPTLNYPPMAPVNPMAYRDPNPPRRRWRPFRPP) are necessary for nucleocapsid assembly and virus assembly. The disordered stretch occupies residues 1–104 (MFPYPTLNYP…KQKPGKRQRM (104 aa)). The segment at 37–70 (LAAQIEDLRRSIANLTFKQRAPNPPAGPPAKRKK) is host transcription inhibition. A Supraphysiological nuclear export signal motif is present at residues 44–51 (LRRSIANL). A compositionally biased stretch (basic residues) spans 66 to 104 (AKRKKPAPKPKPAAPKKKRQPPPAKKQKRKQKPGKRQRM). The Nuclear localization signal signature appears at 67–70 (KRKK). Residues 83–113 (KRQPPPAKKQKRKQKPGKRQRMCMKLESDKT) are binding to the viral RNA. A ribosome-binding region spans residues 98-112 (PGKRQRMCMKLESDK). Phosphoserine is present on Ser-110. The region spanning 112–261 (KTFPIMLNGQ…KDTPEGSEPW (150 aa)) is the Peptidase S3 domain. At Thr-113 the chain carries Phosphothreonine. Active-site charge relay system residues include His-138, Asp-160, and Ser-212. The segment at 262-273 (SLTTVMCVLANI) is functions as an uncleaved signal peptide for the precursor of protein E3/E2. Residue Asn-272 is glycosylated (N-linked (GlcNAc...) asparagine; by host). At 325–688 (DLETHFTQYK…YYYNRYPMTT (364 aa)) the chain is on the extracellular side. Residues 689–709 (VIGLCTCVAIIMVSCVTSVWL) form a helical membrane-spanning segment. Residues 710-744 (LCRTRNLCITPYRLAPNAQVPILLAVLCCVKPTRA) lie on the Cytoplasmic side of the membrane. 3 S-palmitoyl cysteine; by host lipidation sites follow: Cys-717, Cys-737, and Cys-738. Residues 717–737 (CITPYRLAPNAQVPILLAVLC) are transient transmembrane before p62-6K protein processing. Residues 745–759 (DDTLQVLNYLWNNNQ) are Extracellular-facing. 2 consecutive transmembrane segments (helical) span residues 760-780 (NFFW…MRML) and 781-801 (RCLL…GAAA). The Extracellular segment spans residues 802 to 1218 (YEHAAVMPNK…WSWLKVLVGS (417 aa)). 8 cysteine pairs are disulfide-bonded: Cys-850–Cys-915, Cys-863–Cys-895, Cys-864–Cys-897, Cys-869–Cys-879, Cys-1061–Cys-1073, Cys-1103–Cys-1178, Cys-1108–Cys-1182, and Cys-1130–Cys-1172. The segment at 885 to 902 (VYPFMWGGAYCFCDTENT) is E1 fusion peptide loop. A helical transmembrane segment spans residues 1219–1239 (TSAFIVLGLIATAVVALVLFT). The Cytoplasmic segment spans residues 1240-1242 (HRH).

As to quaternary structure, part of a tetrameric complex composed of host CRM1, host importin alpha/beta dimer and the viral capsid; this complex blocks the receptor-mediated transport through the nuclear pore. Interacts with host phosphatase PPP1CA; this interaction dephosphorylates the capsid protein, which increases its ability to bind to the viral genome. Interacts with host karyopherin KPNA4; this interaction allows the nuclear import of the viral capsid protein. Interacts with spike glycoprotein E2. Interacts with host IRAK1; the interaction leads to inhibition of IRAK1-dependent signaling. In terms of assembly, the precursor of protein E3/E2 and E1 form a heterodimer shortly after synthesis. The precursor of protein E3/E2 and E1 form a heterodimer shortly after synthesis. Processing of the precursor of protein E3/E2 into E2 and E3 results in a heterodimer of the spike glycoproteins E2 and E1. Spike at virion surface are constituted of three E2-E1 heterodimers. After target cell attachment and endocytosis, E1 change conformation to form homotrimers. Interacts with 6K protein. As to quaternary structure, processing of the precursor of protein E3/E2 into E2 and E3 results in a heterodimer of the spike glycoproteins E2 and E1. Spike at virion surface are constituted of three E2-E1 heterodimers. Interacts with 6K protein. In terms of assembly, interacts with spike glycoprotein E1. Interacts with spike glycoprotein E2. Structural polyprotein: Specific enzymatic cleavages in vivo yield mature proteins. Capsid protein is auto-cleaved during polyprotein translation, unmasking a signal peptide at the N-terminus of the precursor of E3/E2. The remaining polyprotein is then targeted to the host endoplasmic reticulum, where host signal peptidase cleaves it into pE2, 6K and E1 proteins. pE2 is further processed to mature E3 and E2 by host furin in trans-Golgi vesicle. Post-translationally, phosphorylated on serine and threonine residues. In terms of processing, palmitoylated via thioester bonds. These palmitoylations may induce disruption of the C-terminus transmembrane. This would result in the reorientation of E2 C-terminus from lumenal to cytoplasmic side. N-glycosylated. Post-translationally, palmitoylated via thioester bonds.

The protein localises to the virion. It is found in the host cytoplasm. Its subcellular location is the host cell membrane. The protein resides in the host nucleus. It localises to the virion membrane. The catalysed reaction is Autocatalytic release of the core protein from the N-terminus of the togavirus structural polyprotein by hydrolysis of a -Trp-|-Ser- bond.. Its function is as follows. Forms an icosahedral capsid with a T=4 symmetry composed of 240 copies of the capsid protein surrounded by a lipid membrane through which penetrate 80 spikes composed of trimers of E1-E2 heterodimers. The capsid protein binds to the viral RNA genome at a site adjacent to a ribosome binding site for viral genome translation following genome release. Possesses a protease activity that results in its autocatalytic cleavage from the nascent structural protein. Following its self-cleavage, the capsid protein transiently associates with ribosomes, and within several minutes the protein binds to viral RNA and rapidly assembles into icosahedric core particles. The resulting nucleocapsid eventually associates with the cytoplasmic domain of the spike glycoprotein E2 at the cell membrane, leading to budding and formation of mature virions. In case of infection, new virions attach to target cells and after clathrin-mediated endocytosis their membrane fuses with the host endosomal membrane. This leads to the release of the nucleocapsid into the cytoplasm, followed by an uncoating event necessary for the genomic RNA to become accessible. The uncoating might be triggered by the interaction of capsid proteins with ribosomes. Binding of ribosomes would release the genomic RNA since the same region is genomic RNA-binding and ribosome-binding. Specifically inhibits interleukin-1 receptor-associated kinase 1/IRAK1-dependent signaling during viral entry, representing a means by which the alphaviruses may evade innate immune detection and activation prior to viral gene expression. Inhibits host transcription. Forms a tetrameric complex with XPO1/CRM1 and the nuclear import receptor importin. This complex blocks the central channel of host nuclear pores thereby inhibiting the receptor-mediated nuclear transport and thus the host mRNA and rRNA transcription. The inhibition of transcription is linked to a cytopathic effect on the host cell. In terms of biological role, provides the signal sequence for the translocation of the precursor of protein E3/E2 to the host endoplasmic reticulum. Furin-cleaved E3 remains associated with spike glycoprotein E1 and mediates pH protection of the latter during the transport via the secretory pathway. After virion release from the host cell, the assembly protein E3 is gradually released in the extracellular space. Plays a role in viral attachment to target host cell, by binding to the cell receptor. Synthesized as a p62 precursor which is processed by furin at the cell membrane just before virion budding, giving rise to E2-E1 heterodimer. The p62-E1 heterodimer is stable, whereas E2-E1 is unstable and dissociate at low pH. p62 is processed at the last step, presumably to avoid E1 fusion activation before its final export to cell surface. E2 C-terminus contains a transitory transmembrane that would be disrupted by palmitoylation, resulting in reorientation of the C-terminal tail from lumenal to cytoplasmic side. This step is critical since E2 C-terminus is involved in budding by interacting with capsid proteins. This release of E2 C-terminus in cytoplasm occurs lately in protein export, and precludes premature assembly of particles at the endoplasmic reticulum membrane. Functionally, constitutive membrane protein involved in virus glycoprotein processing, cell permeabilization, and the budding of viral particles. Disrupts the calcium homeostasis of the cell, probably at the endoplasmic reticulum level. This leads to cytoplasmic calcium elevation. Because of its lipophilic properties, the 6K protein is postulated to influence the selection of lipids that interact with the transmembrane domains of the glycoproteins, which, in turn, affects the deformability of the bilayer required for the extreme curvature that occurs as budding proceeds. Present in low amount in virions, about 3% compared to viral glycoproteins. Its function is as follows. Class II viral fusion protein. Fusion activity is inactive as long as E1 is bound to E2 in mature virion. After virus attachment to target cell and endocytosis, acidification of the endosome would induce dissociation of E1/E2 heterodimer and concomitant trimerization of the E1 subunits. This E1 trimer is fusion active, and promotes release of viral nucleocapsid in cytoplasm after endosome and viral membrane fusion. Efficient fusion requires the presence of cholesterol and sphingolipid in the target membrane. Fusion is optimal at levels of about 1 molecule of cholesterol per 2 molecules of phospholipids, and is specific for sterols containing a 3-beta-hydroxyl group. This is Structural polyprotein from Aedes (Human).